The chain runs to 176 residues: Ribosome maturation factor RimM (176 aa).

One can recognise a PRC barrel domain in the interval 104–176; the sequence is EDEYYFYEIL…KIIAKEMEWI (73 aa).

The protein belongs to the RimM family. As to quaternary structure, binds ribosomal protein uS19.

The protein resides in the cytoplasm. Functionally, an accessory protein needed during the final step in the assembly of 30S ribosomal subunit, possibly for assembly of the head region. Essential for efficient processing of 16S rRNA. May be needed both before and after RbfA during the maturation of 16S rRNA. It has affinity for free ribosomal 30S subunits but not for 70S ribosomes. The chain is Ribosome maturation factor RimM from Thermotoga maritima (strain ATCC 43589 / DSM 3109 / JCM 10099 / NBRC 100826 / MSB8).